The sequence spans 580 residues: DNA mismatch repair protein MutL (580 aa).

It belongs to the DNA mismatch repair MutL/HexB family.

Functionally, this protein is involved in the repair of mismatches in DNA. It is required for dam-dependent methyl-directed DNA mismatch repair. May act as a 'molecular matchmaker', a protein that promotes the formation of a stable complex between two or more DNA-binding proteins in an ATP-dependent manner without itself being part of a final effector complex. The protein is DNA mismatch repair protein MutL of Chlamydia caviae (strain ATCC VR-813 / DSM 19441 / 03DC25 / GPIC) (Chlamydophila caviae).